The chain runs to 341 residues: Solute carrier family 25 member 43 (341 aa).

Solcar repeat units follow at residues 11–101 (TGGQ…TDDL), 105–185 (SQWS…LLVY), and 200–298 (SLPQ…LYQN). 6 helical membrane passes run 16-36 (LLCA…LELA), 68-88 (LWKG…VQLA), 110-130 (IMAG…TDLI), 166-186 (GVSL…LVYM), 205-225 (FANV…FETV), and 262-282 (VLGL…YFGI).

It belongs to the mitochondrial carrier (TC 2.A.29) family.

The protein resides in the mitochondrion inner membrane. This is Solute carrier family 25 member 43 (SLC25A43) from Homo sapiens (Human).